The following is a 102-amino-acid chain: Small ribosomal subunit protein uS10 (102 aa).

Belongs to the universal ribosomal protein uS10 family. Part of the 30S ribosomal subunit.

Functionally, involved in the binding of tRNA to the ribosomes. In Rhodopseudomonas palustris (strain BisB18), this protein is Small ribosomal subunit protein uS10.